The chain runs to 346 residues: NADH-ubiquinone oxidoreductase chain 2 (346 aa).

Transmembrane regions (helical) follow at residues 1-21, 25-45, 60-80, 95-115, 124-144, 149-169, 178-195, 200-219, 242-262, 274-294, and 326-346; these read MNPH…TITI, HWVL…PLIS, FLTQ…NAWA, CLLL…HFWF, LMTA…LLLM, LNPA…GWMG, ILAF…IILV, LALL…FMAL, ATLM…GFMP, EMTP…FFYL, and AILA…HAIV.

Belongs to the complex I subunit 2 family.

Its subcellular location is the mitochondrion inner membrane. The enzyme catalyses a ubiquinone + NADH + 5 H(+)(in) = a ubiquinol + NAD(+) + 4 H(+)(out). In terms of biological role, core subunit of the mitochondrial membrane respiratory chain NADH dehydrogenase (Complex I) that is believed to belong to the minimal assembly required for catalysis. Complex I functions in the transfer of electrons from NADH to the respiratory chain. The immediate electron acceptor for the enzyme is believed to be ubiquinone. The sequence is that of NADH-ubiquinone oxidoreductase chain 2 (MT-ND2) from Anas acuta (Northern pintail).